Reading from the N-terminus, the 238-residue chain is Auxin-responsive protein IAA2 (238 aa).

The short motif at 24–28 (LCLGL) is the EAR-like (transcriptional repression) element. 3 stretches are compositionally biased toward low complexity: residues 33–44 (SSSSSSKPSEGS), 59–69 (ASKPSGAAAAA), and 85–94 (ASSSSSSSKQ). Disordered stretches follow at residues 33–69 (SSSS…AAAA) and 82–114 (RNLA…KDGG). The 99-residue stretch at 118–216 (GMFVKINMDG…TAKRLRVLKS (99 aa)) folds into the PB1 domain. Positions 217–238 (SDLPPPSLMRAAGSRKRAAADS) are disordered. The segment covering 229–238 (GSRKRAAADS) has biased composition (basic residues).

It belongs to the Aux/IAA family. Homodimers and heterodimers. As to expression, highly expressed in flowers.

It localises to the nucleus. Its function is as follows. Aux/IAA proteins are short-lived transcriptional factors that function as repressors of early auxin response genes at low auxin concentrations. This is Auxin-responsive protein IAA2 (IAA2) from Oryza sativa subsp. japonica (Rice).